Reading from the N-terminus, the 87-residue chain is Small ribosomal subunit protein uS17 (87 aa).

Belongs to the universal ribosomal protein uS17 family. Part of the 30S ribosomal subunit.

One of the primary rRNA binding proteins, it binds specifically to the 5'-end of 16S ribosomal RNA. The protein is Small ribosomal subunit protein uS17 of Bacillus cereus (strain ATCC 14579 / DSM 31 / CCUG 7414 / JCM 2152 / NBRC 15305 / NCIMB 9373 / NCTC 2599 / NRRL B-3711).